A 512-amino-acid polypeptide reads, in one-letter code: PTS system mannitol-specific EIICB component (512 aa).

Topologically, residues M1–N28 are cytoplasmic. The PTS EIIC type-2 domain occupies F17 to D349. The chain crosses the membrane as a helical span at residues I29–N50. At K51 to A54 the chain is on the extracellular side. The helical transmembrane segment at T55–R75 threads the bilayer. Topologically, residues L76–F139 are cytoplasmic. A helical membrane pass occupies residues S140–K161. Residues F162 to A170 lie on the Extracellular side of the membrane. The chain crosses the membrane as a helical span at residues V171–K191. The Cytoplasmic segment spans residues I192 to A278. Residues V279 to K298 traverse the membrane as a helical segment. Over S299–F318 the chain is Extracellular. Residues L319–M340 traverse the membrane as a helical segment. The Cytoplasmic portion of the chain corresponds to K341–A512. Low complexity predominate over residues S365 to K376. The tract at residues S365–L401 is disordered. The segment covering T380–S392 has biased composition (polar residues). The PTS EIIB type-2 domain occupies N419–A512. The active-site Phosphocysteine intermediate; for EIIB activity is C425. C425 carries the phosphocysteine; by EIIA modification.

Homodimer.

The protein localises to the cell membrane. The catalysed reaction is D-mannitol(out) + N(pros)-phospho-L-histidyl-[protein] = D-mannitol 1-phosphate(in) + L-histidyl-[protein]. In terms of biological role, the phosphoenolpyruvate-dependent sugar phosphotransferase system (sugar PTS), a major carbohydrate active transport system, catalyzes the phosphorylation of incoming sugar substrates concomitantly with their translocation across the cell membrane. The enzyme II CmtAB PTS system is involved in D-mannitol transport. The protein is PTS system mannitol-specific EIICB component (mtlA) of Staphylococcus aureus (strain MRSA252).